The primary structure comprises 137 residues: Large ribosomal subunit protein uL16 (137 aa).

Residues 1-17 (MLQPKRTKFRKTHKGRN) show a composition bias toward basic residues. The segment at 1–23 (MLQPKRTKFRKTHKGRNRGLAQN) is disordered.

This sequence belongs to the universal ribosomal protein uL16 family. As to quaternary structure, part of the 50S ribosomal subunit.

Functionally, binds 23S rRNA and is also seen to make contacts with the A and possibly P site tRNAs. The polypeptide is Large ribosomal subunit protein uL16 (Pseudoalteromonas translucida (strain TAC 125)).